The sequence spans 570 residues: Proline--tRNA ligase (570 aa).

This sequence belongs to the class-II aminoacyl-tRNA synthetase family. ProS type 1 subfamily. Homodimer.

The protein localises to the cytoplasm. It catalyses the reaction tRNA(Pro) + L-proline + ATP = L-prolyl-tRNA(Pro) + AMP + diphosphate. Its function is as follows. Catalyzes the attachment of proline to tRNA(Pro) in a two-step reaction: proline is first activated by ATP to form Pro-AMP and then transferred to the acceptor end of tRNA(Pro). As ProRS can inadvertently accommodate and process non-cognate amino acids such as alanine and cysteine, to avoid such errors it has two additional distinct editing activities against alanine. One activity is designated as 'pretransfer' editing and involves the tRNA(Pro)-independent hydrolysis of activated Ala-AMP. The other activity is designated 'posttransfer' editing and involves deacylation of mischarged Ala-tRNA(Pro). The misacylated Cys-tRNA(Pro) is not edited by ProRS. This is Proline--tRNA ligase from Desulfotalea psychrophila (strain LSv54 / DSM 12343).